Reading from the N-terminus, the 147-residue chain is Transcription antitermination protein NusB (147 aa).

Belongs to the NusB family.

Its function is as follows. Involved in transcription antitermination. Required for transcription of ribosomal RNA (rRNA) genes. Binds specifically to the boxA antiterminator sequence of the ribosomal RNA (rrn) operons. In Teredinibacter turnerae (strain ATCC 39867 / T7901), this protein is Transcription antitermination protein NusB.